Consider the following 364-residue polypeptide: tRNA 2-selenouridine synthase (364 aa).

The region spanning 14–137 (LIADTPIIDV…LRQTTIQATI (124 aa)) is the Rhodanese domain. The active-site S-selanylcysteine intermediate is the Cys97.

Belongs to the SelU family. Monomer.

It catalyses the reaction 5-methylaminomethyl-2-thiouridine(34) in tRNA + selenophosphate + (2E)-geranyl diphosphate + H2O + H(+) = 5-methylaminomethyl-2-selenouridine(34) in tRNA + (2E)-thiogeraniol + phosphate + diphosphate. The catalysed reaction is 5-methylaminomethyl-2-thiouridine(34) in tRNA + (2E)-geranyl diphosphate = 5-methylaminomethyl-S-(2E)-geranyl-thiouridine(34) in tRNA + diphosphate. The enzyme catalyses 5-methylaminomethyl-S-(2E)-geranyl-thiouridine(34) in tRNA + selenophosphate + H(+) = 5-methylaminomethyl-2-(Se-phospho)selenouridine(34) in tRNA + (2E)-thiogeraniol. It carries out the reaction 5-methylaminomethyl-2-(Se-phospho)selenouridine(34) in tRNA + H2O = 5-methylaminomethyl-2-selenouridine(34) in tRNA + phosphate. Involved in the post-transcriptional modification of the uridine at the wobble position (U34) of tRNA(Lys), tRNA(Glu) and tRNA(Gln). Catalyzes the conversion of 2-thiouridine (S2U-RNA) to 2-selenouridine (Se2U-RNA). Acts in a two-step process involving geranylation of 2-thiouridine (S2U) to S-geranyl-2-thiouridine (geS2U) and subsequent selenation of the latter derivative to 2-selenouridine (Se2U) in the tRNA chain. The chain is tRNA 2-selenouridine synthase from Escherichia coli O8 (strain IAI1).